A 154-amino-acid chain; its full sequence is 6,7-dimethyl-8-ribityllumazine synthase (154 aa).

Residues phenylalanine 23, 57–59 (AFE), and 81–83 (AVI) contribute to the 5-amino-6-(D-ribitylamino)uracil site. A (2S)-2-hydroxy-3-oxobutyl phosphate-binding site is contributed by 86–87 (ST). Histidine 89 serves as the catalytic Proton donor. Phenylalanine 114 provides a ligand contact to 5-amino-6-(D-ribitylamino)uracil. Arginine 128 contributes to the (2S)-2-hydroxy-3-oxobutyl phosphate binding site.

It belongs to the DMRL synthase family.

The catalysed reaction is (2S)-2-hydroxy-3-oxobutyl phosphate + 5-amino-6-(D-ribitylamino)uracil = 6,7-dimethyl-8-(1-D-ribityl)lumazine + phosphate + 2 H2O + H(+). The protein operates within cofactor biosynthesis; riboflavin biosynthesis; riboflavin from 2-hydroxy-3-oxobutyl phosphate and 5-amino-6-(D-ribitylamino)uracil: step 1/2. Its function is as follows. Catalyzes the formation of 6,7-dimethyl-8-ribityllumazine by condensation of 5-amino-6-(D-ribitylamino)uracil with 3,4-dihydroxy-2-butanone 4-phosphate. This is the penultimate step in the biosynthesis of riboflavin. In Syntrophotalea carbinolica (strain DSM 2380 / NBRC 103641 / GraBd1) (Pelobacter carbinolicus), this protein is 6,7-dimethyl-8-ribityllumazine synthase.